The chain runs to 396 residues: Odorant receptor 49a (396 aa).

Topologically, residues 1-6 are cytoplasmic; it reads MEKLRS. The chain crosses the membrane as a helical span at residues 7–27; sequence YEDFIFMANMMFKTLGYDLFH. Topologically, residues 28-34 are extracellular; sequence TPKPWWR. The helical transmembrane segment at 35-55 threads the bilayer; sequence YLLVRGYFVLCTISNFYEASM. At 56–70 the chain is on the cytoplasmic side; sequence VTTRIIEWESLAGSP. A helical membrane pass occupies residues 71–91; sequence SKIMRQGLHFFYMLSSQLKFI. Residues 92 to 141 lie on the Extracellular side of the membrane; it reads TFMINRKRLLQLSHRLKELYPHKEQNQRKYEVNKYYLSCSTRNVLYVYYF. The chain crosses the membrane as a helical span at residues 142-162; the sequence is VMVVMALEPLVQSCIMYLIGF. Residues 163–209 lie on the Cytoplasmic side of the membrane; it reads GKADFTYKRIFPTRLTFDSEKPLGYVLAYVIDFTYSQFIVNVSLGTD. Residues 210–230 form a helical membrane-spanning segment; it reads LWMMCVSSQISMHLGYLANML. Topologically, residues 231 to 266 are extracellular; sequence ASIRPSPETEQQDCDFLASIIKRHQLMIRLQKDVNY. The chain crosses the membrane as a helical span at residues 267-287; the sequence is VFGLLLASNLFTTSCLLCCMA. Topologically, residues 288 to 296 are cytoplasmic; sequence YYTVVEGFN. The helical transmembrane segment at 297-317 threads the bilayer; it reads WEGISYMMLFASVAAQFYVVS. Topologically, residues 318 to 396 are extracellular; it reads SHGQMLIDLS…FAVIRQTVEK (79 aa).

Belongs to the insect chemoreceptor superfamily. Heteromeric odorant receptor channel (TC 1.A.69) family. Or49a subfamily. In terms of assembly, interacts with Orco. Complexes exist early in the endomembrane system in olfactory sensory neurons (OSNs), coupling these complexes to the conserved ciliary trafficking pathway.

It is found in the cell membrane. Its function is as follows. Odorant receptor which mediates acceptance or avoidance behavior, depending on its substrates. The odorant receptor repertoire encodes a large collection of odor stimuli that vary widely in identity, intensity, and duration. May form a complex with Orco to form odorant-sensing units, providing sensitive and prolonged odorant signaling and calcium permeability. Involved in the behavioral responses to butanol and 2-heptanone. This chain is Odorant receptor 49a (Or49a), found in Drosophila melanogaster (Fruit fly).